A 90-amino-acid chain; its full sequence is MIRRLLIAPIRFYRYFLSPWVGRQCRFTPTCSAYAIEAIERHGAWRGLWLAARRIGRCHPWSPGGYDPVPPGHGAGAQACCAHRHRTEPD.

Belongs to the UPF0161 family.

The protein resides in the cell inner membrane. Could be involved in insertion of integral membrane proteins into the membrane. The polypeptide is Putative membrane protein insertion efficiency factor (Bordetella bronchiseptica (strain ATCC BAA-588 / NCTC 13252 / RB50) (Alcaligenes bronchisepticus)).